The primary structure comprises 443 residues: Phosphoglucosamine mutase (443 aa).

The active-site Phosphoserine intermediate is the S102. Residues S102, D241, D243, and D245 each contribute to the Mg(2+) site. S102 is modified (phosphoserine).

This sequence belongs to the phosphohexose mutase family. Requires Mg(2+) as cofactor. Post-translationally, activated by phosphorylation.

The catalysed reaction is alpha-D-glucosamine 1-phosphate = D-glucosamine 6-phosphate. Its function is as follows. Catalyzes the conversion of glucosamine-6-phosphate to glucosamine-1-phosphate. The polypeptide is Phosphoglucosamine mutase (Albidiferax ferrireducens (strain ATCC BAA-621 / DSM 15236 / T118) (Rhodoferax ferrireducens)).